Consider the following 223-residue polypeptide: Ribonuclease HII (223 aa).

The region spanning 1 to 219 (MMIAGIDEAG…VENIREELEK (219 aa)) is the RNase H type-2 domain. Asp7, Glu8, and Asp105 together coordinate a divalent metal cation.

The protein belongs to the RNase HII family. Requires Mn(2+) as cofactor. Mg(2+) is required as a cofactor.

The protein resides in the cytoplasm. It carries out the reaction Endonucleolytic cleavage to 5'-phosphomonoester.. Its function is as follows. Endonuclease that specifically degrades the RNA of RNA-DNA hybrids. The polypeptide is Ribonuclease HII (Methanosarcina acetivorans (strain ATCC 35395 / DSM 2834 / JCM 12185 / C2A)).